A 645-amino-acid chain; its full sequence is MTTMPPEMSATTAAPVGSAPSATAHHPAAVGGGMPRPASPAVGSNTTTATATTATRSRFMITDILAGAAAASAAAAAAAAALAAASSGGGRGSPTDSEREQSLVAQHHHHHQQQQQHHHHQQQQQQQQHQQAALQQYIVQQQQLLRFEREREREREREHYRERHSPPGNNPYAHHPMPPHLLAHFPPAHYAVLQQQQQQQQQQQHPHPHHLQLERERLEALHRHGHGLTGDPAQHLSHLSHLSHQQHHPHLHHPMHDERSRSPLMLQQLGGNGGNNNNNNNNSSSASNNNNNNNNSASANSNIISGNSSSSNNNNGSGNGNMLLGGPGSSISGDQASTIDDSDSDDCGGKDDDGDDSMKNGSSANGDSSSHLSLSLSKKQRKARTAFTDHQLQTLEKSFERQKYLSVQDRMELANKLELSDCQVKTWYQNRRTKWKRQTAVGLELLAEAGNYAAFQRLYGGATPYLSAWPYAAAAAAQSPHGATPSAIDIYYRQAAAAAAMQKPSLPASYRMYQSSIPPGMSLPGMPAPPPPGAAPMLSGYYAAAAAAAASAGAQQQQQQPPAASRSPATSQSANSEADCERTSSSSRQRLITPSPPLNPGSPPHRERINEEEDRERDEERDIERERERERERDEDDEEELALEV.

6 disordered regions span residues 1–50 (MTTM…TTAT), 86–134 (SSGG…QAAL), 149–176 (RERE…AHHP), 240–259 (SHLS…HDER), 265–385 (MLQQ…KART), and 553–645 (GAQQ…ALEV). Positions 18–29 (SAPSATAHHPAA) are enriched in low complexity. The segment covering 106–121 (QHHHHHQQQQQHHHHQ) has biased composition (basic residues). Over residues 122 to 134 (QQQQQQQHQQAAL) the composition is skewed to low complexity. Residues 149-165 (REREREREREHYRERHS) are compositionally biased toward basic and acidic residues. A compositionally biased stretch (basic residues) spans 244 to 253 (HQQHHPHLHH). A compositionally biased stretch (low complexity) spans 275 to 316 (NNNNNNNNSSSASNNNNNNNNSASANSNIISGNSSSSNNNNG). The segment covering 317 to 328 (SGNGNMLLGGPG) has biased composition (gly residues). The segment covering 329-339 (SSISGDQASTI) has biased composition (polar residues). A compositionally biased stretch (low complexity) spans 362 to 377 (SSANGDSSSHLSLSLS). A DNA-binding region (homeobox) is located at residues 380–439 (QRKARTAFTDHQLQTLEKSFERQKYLSVQDRMELANKLELSDCQVKTWYQNRRTKWKRQT). Positions 553–574 (GAQQQQQQPPAASRSPATSQSA) are enriched in low complexity. Over residues 583-592 (TSSSSRQRLI) the composition is skewed to polar residues. T593 bears the Phosphothreonine mark. Residues 594 to 603 (PSPPLNPGSP) are compositionally biased toward pro residues. Phosphoserine is present on residues S595 and S602. The segment covering 618–632 (DEERDIERERERERE) has biased composition (basic and acidic residues). Over residues 633–645 (RDEDDEEELALEV) the composition is skewed to acidic residues.

The protein belongs to the Antp homeobox family. B-H1 and B-H2 are abundant in the eye-antenna imaginal disk. Expressed in R1 and R6 cells throughout larval stage until 30 hours after puparium formation, at which time expression is seen in the anterior and posterior primary pigment cells. Coexpressed in embryonic glial cells, neurons of the CNS and PNS, most latitudinal anterior cells of the developing notum and the central circular region of the leg and antennal imaginal disk throughout larval development.

The protein resides in the nucleus. Functionally, B-H1 and B-H2 are regulated by members of the wg signaling pathway; wg and dpp. B-H1 and B-H2 are coexpressed and functionally required in R1 and R6 receptor cells and primary pigment cells for normal eye development. Coexpression is also required for the fate determination of external sensory organs, formation of notal microchaetae, formation of presutural macrochaetae, antennal development and for distal leg morphogenesis; segmentation and specification of tarsal segments 3-5. This is Homeobox protein B-H2 (B-H2) from Drosophila melanogaster (Fruit fly).